The following is a 542-amino-acid chain: CTP synthase (542 aa).

The interval 1–265 (MTRFIFITGG…DVQVCRHFHL (265 aa)) is amidoligase domain. Residue Ser13 participates in CTP binding. Ser13 contributes to the UTP binding site. ATP-binding positions include 14–19 (SLGKGL) and Asp71. Mg(2+)-binding residues include Asp71 and Glu139. CTP contacts are provided by residues 146–148 (DIE), 186–191 (KTKPTQ), and Lys222. Residues 186–191 (KTKPTQ) and Lys222 each bind UTP. Positions 291–541 (TIAVVGKYTS…VQAAITQSRL (251 aa)) constitute a Glutamine amidotransferase type-1 domain. Gly353 serves as a coordination point for L-glutamine. Cys380 functions as the Nucleophile; for glutamine hydrolysis in the catalytic mechanism. L-glutamine-binding positions include 381 to 384 (FGMQ), Glu404, and Arg469. Catalysis depends on residues His514 and Glu516.

This sequence belongs to the CTP synthase family. As to quaternary structure, homotetramer.

The catalysed reaction is UTP + L-glutamine + ATP + H2O = CTP + L-glutamate + ADP + phosphate + 2 H(+). The enzyme catalyses L-glutamine + H2O = L-glutamate + NH4(+). It catalyses the reaction UTP + NH4(+) + ATP = CTP + ADP + phosphate + 2 H(+). Its pathway is pyrimidine metabolism; CTP biosynthesis via de novo pathway; CTP from UDP: step 2/2. Its activity is regulated as follows. Allosterically activated by GTP, when glutamine is the substrate; GTP has no effect on the reaction when ammonia is the substrate. The allosteric effector GTP functions by stabilizing the protein conformation that binds the tetrahedral intermediate(s) formed during glutamine hydrolysis. Inhibited by the product CTP, via allosteric rather than competitive inhibition. Catalyzes the ATP-dependent amination of UTP to CTP with either L-glutamine or ammonia as the source of nitrogen. Regulates intracellular CTP levels through interactions with the four ribonucleotide triphosphates. This is CTP synthase from Rhodospirillum rubrum (strain ATCC 11170 / ATH 1.1.1 / DSM 467 / LMG 4362 / NCIMB 8255 / S1).